The sequence spans 325 residues: Isoaspartyl peptidase/L-asparaginase (325 aa).

Threonine 193 acts as the Nucleophile in catalysis. Substrate contacts are provided by residues 221–224 (RIGD) and 243–246 (TGKG).

The protein belongs to the Ntn-hydrolase family. As to quaternary structure, heterotetramer of two alpha and two beta chains arranged as a dimer of alpha/beta heterodimers. Cleaved into an alpha and beta chain by autocatalysis; this activates the enzyme. The N-terminal residue of the beta subunit is responsible for the nucleophile hydrolase activity. Developing seeds.

It catalyses the reaction Cleavage of a beta-linked Asp residue from the N-terminus of a polypeptide.. Acts in asparagine catabolism but also in the final steps of protein degradation via hydrolysis of a range of isoaspartyl dipeptides. The chain is Isoaspartyl peptidase/L-asparaginase from Lupinus angustifolius (Narrow-leaved blue lupine).